We begin with the raw amino-acid sequence, 174 residues long: uncharacterized protein (174 aa).

The tract at residues 138–174 is disordered; the sequence is VNLTSKSSGRSDEEGTTRRAPVLKTRADFVSRKDKHR. Residues 162–174 show a composition bias toward basic and acidic residues; sequence TRADFVSRKDKHR.

This is an uncharacterized protein from Bos taurus (Bovine).